The chain runs to 494 residues: MAEISATSFPSSSSSALVIRSSHNGSLKCQNVAVPKTTSQFQELSLKRSQLVGNAVVTGHVTGSRSCKNQAIRAVLSGDGTALTTDSKEAGLRGKLKKVVLAYSGGLDTSVIVPWLKENYGCEVVCFTADVGQGIKELEGLEQKAKASGASQLVVKDLTEEFVKDFIFPCLRAGAIYERKYLLGTSMARPVIAKAMVDVAAEVGADAVAHGCTGKGNDQVRFELTFFSLNPELKVVAPWREWEIQGREDAIEYAKKHNVPVPVTKKSIYSRDRNLWHLSHEGDLLEDPANEPKKDMYMMSVDPEDAPDQPEYIEIGIESGLPVALNGKALSPATLLAELNTIGGKHGIGRIDMVENRLVGMKSRGVYETPGGTILFAAVQELESLTLDRESIQVKDTLALKYAEMVYAGRWFDPLRESMDAFMEKITETTTGSVTLKLYKGSVSVTGRQSPNSLYRQDISSFEGSEIYNQADAAGFIRLYGLPMKIRAMLKKIS.

The transit peptide at 1 to 73 (MAEISATSFP…SRSCKNQAIR (73 aa)) directs the protein to the chloroplast. Position 74 is an N-acetylalanine (Ala-74). ATP is bound by residues 102-110 (AYSGGLDTS) and Ala-129. L-citrulline-binding residues include Tyr-181 and Ser-186. An ATP-binding site is contributed by Gly-211. Positions 213, 217, and 218 each coordinate L-aspartate. Asn-217 is a binding site for L-citrulline. L-citrulline contacts are provided by Arg-221, Ser-270, Ser-279, Glu-355, and Tyr-367.

Belongs to the argininosuccinate synthase family. Type 1 subfamily. As to quaternary structure, homotetramer.

It localises to the plastid. Its subcellular location is the chloroplast. It carries out the reaction L-citrulline + L-aspartate + ATP = 2-(N(omega)-L-arginino)succinate + AMP + diphosphate + H(+). The protein operates within amino-acid biosynthesis; L-arginine biosynthesis; L-arginine from L-ornithine and carbamoyl phosphate: step 2/3. This Arabidopsis thaliana (Mouse-ear cress) protein is Argininosuccinate synthase, chloroplastic.